Reading from the N-terminus, the 353-residue chain is 2-oxoglutarate-dependent dioxygenase phqC (353 aa).

One can recognise a Fe2OG dioxygenase domain in the interval 199 to 315 (CASELRLNNY…RRSCAFFLKA (117 aa)). Residues H227, D229, and H287 each coordinate Fe cation. R302 serves as a coordination point for 2-oxoglutarate.

The protein belongs to the iron/ascorbate-dependent oxidoreductase family. Requires Fe(2+) as cofactor.

It participates in alkaloid biosynthesis. Functionally, 2-oxoglutarate-dependent dioxygenase; part of the gene cluster that mediates the biosynthesis of paraherquamide, a fungal indole alkaloid that belongs to a family of natural products containing a characteristic bicyclo[2.2.2]diazaoctane core. The first steps in the biosynthesis of paraherquamide is the production of the beta-methyl-proline precursor from L-isoleucine. They require oxidation of a terminally hydroxylated L-isoleucine to the corresponding aldehyde by enzymes which have still to be identified. Spontaneous cyclization and dehydration would yield the 4-methyl pyrolline-5-carboxylic acid, which is then reduced by the pyrroline-5-carboxylate reductase phqD leading to the beta-methyl-proline precursor. The next step of paraherquamide biosynthesis involves coupling of beta-methyl-proline and L-tryptophan by the bimodular NRPS phqB, to produce a monooxopiperazine intermediate. The reductase (R) domain of phqB utilizes NADPH for hydride transfer to reduce the thioester bond of the T domain-tethered linear dipeptide to a hemithioaminal intermediate, which spontaneously cleaves the C-S bond to release the aldehyde product. This compound undergoes spontaneous cyclization and dehydration to give a dienamine which is reverse prenylated at C-2 by the reverse prenyltransferase phqJ. The other prenyltransferase present in the cluster, phqI may be a redundant gene in the pathway. During biosynthetic assembly, the key step to produce the polycyclic core is catalyzed by the bifunctional reductase and intramolecular [4+2] Diels-Alderase, phqE, resulting in formation of the [2.2.2] diazaoctane intermediate preparaherquamide. Following formation of preparaherquamide, an indole 2,3-epoxidation-initiated pinacol-like rearrangement is catalyzed by the phqK FAD-dependent monooxygenase. The prenyltransferase phqA, the cytochrome P450 monooxygenase phqL, and the FAD-linked oxidoreductase phqH (or the cytochrome P450 monooxygenase phqM), are proposed to be involved in the formation of the pyran ring. The FAD-dependent monooxygenase phqK is likely responsible for generation of the spiro-oxindole, and the N-methylation is likely mediated by the phqN methyltransferase leading to the isolable natural product paraherquamide F. However, the order of these biosynthetic steps has still to be determined. In late-stage paraherquamide biosynthesis, the third P450 monooxygenase, phqO, is probably responsible for the C-14 hydroxylation, transforming paraherquamide F to paraherquamide G, and paraherquamide E to the final product paraherquamide A. The expansion from the 6-membered ring pyran (in paraherquamides F and G) to the 7-membered dioxepin ring (in paraherquamides A and E) represents a poorly understood but intriguing process that probably involves the 2-oxoglutarate-dependent dioxygenase phqC. Finally, the remaining members of the paraherquamide cluster, including phqI as well as phqM (or phqH), do not have a clearly prescribed role and appear to be redundant. This Penicillium fellutanum protein is 2-oxoglutarate-dependent dioxygenase phqC.